A 187-amino-acid chain; its full sequence is MADEQNLDAQAQDQAAEAGAGDELTTRVQVLEEQLAAAQDQSLRVAADLQNVRRRAEQDVEKAHKFALEKFAGDLLPIIDSLERGLDLSNPDDESIRPMREGIELTLKMFQDTLKRYQLEAIDPHGQPFSADQHQAMAMQESADVEPNTVLKVFQKGYQLNGRLLRPAMVVVSKAPSPATPSINEQA.

The disordered stretch occupies residues 1–22; the sequence is MADEQNLDAQAQDQAAEAGAGD. Positions 7-22 are enriched in low complexity; sequence LDAQAQDQAAEAGAGD.

The protein belongs to the GrpE family. Homodimer.

It localises to the cytoplasm. Participates actively in the response to hyperosmotic and heat shock by preventing the aggregation of stress-denatured proteins, in association with DnaK and GrpE. It is the nucleotide exchange factor for DnaK and may function as a thermosensor. Unfolded proteins bind initially to DnaJ; upon interaction with the DnaJ-bound protein, DnaK hydrolyzes its bound ATP, resulting in the formation of a stable complex. GrpE releases ADP from DnaK; ATP binding to DnaK triggers the release of the substrate protein, thus completing the reaction cycle. Several rounds of ATP-dependent interactions between DnaJ, DnaK and GrpE are required for fully efficient folding. This Pseudomonas syringae pv. tomato (strain ATCC BAA-871 / DC3000) protein is Protein GrpE.